A 900-amino-acid polypeptide reads, in one-letter code: Phosphoenolpyruvate carboxylase (900 aa).

Catalysis depends on residues histidine 140 and lysine 568.

This sequence belongs to the PEPCase type 1 family. The cofactor is Mg(2+).

It carries out the reaction oxaloacetate + phosphate = phosphoenolpyruvate + hydrogencarbonate. Forms oxaloacetate, a four-carbon dicarboxylic acid source for the tricarboxylic acid cycle. This Neisseria meningitidis serogroup C / serotype 2a (strain ATCC 700532 / DSM 15464 / FAM18) protein is Phosphoenolpyruvate carboxylase.